Consider the following 166-residue polypeptide: MFPMVTEFMNYGQQTVRAARYIGQGFMITLSHANRLPVTIQYPYEKLITSERFRGRIHFEFDKCIACEVCVRVCPIDLPVVDWKLETDIRKKRLLNYSIDFGICIFCGNCVEYCPTNCLSMTEEYELSTYDRHELNYNQIALGRLPMSVIDDYTIRTIFNLPEIKT.

2 consecutive 4Fe-4S ferredoxin-type domains span residues 55 to 84 (GRIH…VDWK) and 95 to 124 (LNYS…MTEE). [4Fe-4S] cluster is bound by residues Cys-64, Cys-67, Cys-70, Cys-74, Cys-104, Cys-107, Cys-110, and Cys-114.

It belongs to the complex I 23 kDa subunit family. As to quaternary structure, NDH is composed of at least 16 different subunits, 5 of which are encoded in the nucleus. The cofactor is [4Fe-4S] cluster.

The protein resides in the plastid. It localises to the chloroplast thylakoid membrane. It carries out the reaction a plastoquinone + NADH + (n+1) H(+)(in) = a plastoquinol + NAD(+) + n H(+)(out). The catalysed reaction is a plastoquinone + NADPH + (n+1) H(+)(in) = a plastoquinol + NADP(+) + n H(+)(out). Functionally, NDH shuttles electrons from NAD(P)H:plastoquinone, via FMN and iron-sulfur (Fe-S) centers, to quinones in the photosynthetic chain and possibly in a chloroplast respiratory chain. The immediate electron acceptor for the enzyme in this species is believed to be plastoquinone. Couples the redox reaction to proton translocation, and thus conserves the redox energy in a proton gradient. This chain is NAD(P)H-quinone oxidoreductase subunit I, chloroplastic, found in Lactuca sativa (Garden lettuce).